A 357-amino-acid chain; its full sequence is Embryonic growth/differentiation factor 1 (357 aa).

Positions 1 to 23 are cleaved as a signal peptide; sequence MLPVCHRFCDHLLLLLLLPSTTL. The propeptide occupies 24–237; that stretch reads APAPASMGPA…RLCPLPRLRR (214 aa). An N-linked (GlcNAc...) asparagine glycan is attached at N191. 3 disulfides stabilise this stretch: C251–C322, C280–C354, and C284–C356.

The protein belongs to the TGF-beta family. In terms of assembly, homodimer; disulfide-linked. As to expression, expressed almost exclusively in the nervous system.

It is found in the secreted. May mediate cell differentiation events during embryonic development. In Mus musculus (Mouse), this protein is Embryonic growth/differentiation factor 1 (Gdf1).